Here is a 475-residue protein sequence, read N- to C-terminus: Vitronectin (475 aa).

The signal sequence occupies residues 1 to 19 (MAPLRPIFTLALLLWVVLA). Residues 20–63 (DQESCKDRCTEGFNANRKCQCDELCSYYQSCCADYAAECKPQVT) enclose the SMB domain. 7 disulfide bridges follow: Cys-24–Cys-28, Cys-24–Cys-40, Cys-28–Cys-58, Cys-38–Cys-40, Cys-38–Cys-51, Cys-44–Cys-50, and Cys-51–Cys-58. Positions 64–66 (RGD) match the Cell attachment site motif. The residue at position 69 (Thr-69) is a Phosphothreonine. Sulfotyrosine is present on residues Tyr-75, Tyr-78, and Tyr-80. N-linked (GlcNAc...) asparagine glycosylation is present at Asn-87. Residues 87-123 (NASVHAQPESPTVGQEPTLSPDLQTEGGAEPTHEVPL) are disordered. Positions 95 to 109 (ESPTVGQEPTLSPDL) are enriched in polar residues. Hemopexin repeat units lie at residues 158–202 (GKPF…VWGI), 203–250 (EGPI…FSGI), and 251–305 (PDNV…FEHF). N-linked (GlcNAc...) asparagine glycans are attached at residues Asn-169 and Asn-242. Sulfotyrosine occurs at positions 279 and 282. A Phosphoserine modification is found at Ser-312. The tract at residues 359 to 391 (LTPSPSAKKQKSRRRSRKRYRSRYGRGRSQNSR) is disordered. Residues 366-384 (KKQKSRRRSRKRYRSRYGR) are compositionally biased toward basic residues. The segment at 366 to 392 (KKQKSRRRSRKRYRSRYGRGRSQNSRR) is glycosaminoglycan binding region. The residue at position 394 (Ser-394) is a Phosphoserine. One copy of the Hemopexin 4 repeat lies at 419–469 (TSWLKPATSEPIQSVYFFSGDKYYRVNLRTQRVDTVNPPYPRSIAQYWLGC).

As to quaternary structure, interacts with SERPINE1/PAI1 and C1QBP. Monomer. Sulfated on tyrosine residues. Post-translationally, N- and O-glycosylated. In terms of processing, it has been suggested that the active SMB domain may be permitted considerable disulfide bond heterogeneity or variability, thus two alternate disulfide patterns based on 3D structures are described with 1 disulfide bond conserved in both. As to expression, plasma.

It localises to the secreted. Its subcellular location is the extracellular space. Functionally, vitronectin is a cell adhesion and spreading factor found in serum and tissues. Vitronectin interact with glycosaminoglycans and proteoglycans. Is recognized by certain members of the integrin family and serves as a cell-to-substrate adhesion molecule. Inhibitor of the membrane-damaging effect of the terminal cytolytic complement pathway. In Oryctolagus cuniculus (Rabbit), this protein is Vitronectin (VTN).